Consider the following 214-residue polypeptide: Imidazole glycerol phosphate synthase subunit HisH 2 (214 aa).

The Glutamine amidotransferase type-1 domain maps to 2 to 210 (KIVIIDYDMG…LDWVKIQKLG (209 aa)). The Nucleophile role is filled by Cys-82. Active-site residues include His-185 and Glu-187.

As to quaternary structure, heterodimer of HisH and HisF.

It is found in the cytoplasm. The enzyme catalyses 5-[(5-phospho-1-deoxy-D-ribulos-1-ylimino)methylamino]-1-(5-phospho-beta-D-ribosyl)imidazole-4-carboxamide + L-glutamine = D-erythro-1-(imidazol-4-yl)glycerol 3-phosphate + 5-amino-1-(5-phospho-beta-D-ribosyl)imidazole-4-carboxamide + L-glutamate + H(+). It catalyses the reaction L-glutamine + H2O = L-glutamate + NH4(+). It functions in the pathway amino-acid biosynthesis; L-histidine biosynthesis; L-histidine from 5-phospho-alpha-D-ribose 1-diphosphate: step 5/9. Its function is as follows. IGPS catalyzes the conversion of PRFAR and glutamine to IGP, AICAR and glutamate. The HisH subunit provides the glutamine amidotransferase activity that produces the ammonia necessary to HisF for the synthesis of IGP and AICAR. This is Imidazole glycerol phosphate synthase subunit HisH 2 (hisH2) from Vibrio vulnificus (strain YJ016).